The chain runs to 267 residues: Regulatory protein VirG (267 aa).

The 115-residue stretch at 29-143 (HVLLVDDDVA…EFLARIRVAL (115 aa)) folds into the Response regulatory domain. A 4-aspartylphosphate modification is found at Asp78. Residues 155–255 (RRSFCFTDWT…ARGAGYFFDA (101 aa)) constitute a DNA-binding region (ompR/PhoB-type).

Post-translationally, phosphorylated by wide host range (WHR) VirA protein.

The protein localises to the cytoplasm. Functionally, virG is required for the positive regulation of at least two vir loci encoded by the Ti plasmid of A.tumefaciens. The polypeptide is Regulatory protein VirG (virG) (Rhizobium radiobacter (Agrobacterium tumefaciens)).